The following is a 445-amino-acid chain: Phosphoglucosamine mutase (445 aa).

Ser-102 (phosphoserine intermediate) is an active-site residue. Mg(2+) contacts are provided by Ser-102, Asp-241, Asp-243, and Asp-245. Ser-102 is modified (phosphoserine).

This sequence belongs to the phosphohexose mutase family. Mg(2+) serves as cofactor. Post-translationally, activated by phosphorylation.

It carries out the reaction alpha-D-glucosamine 1-phosphate = D-glucosamine 6-phosphate. Its function is as follows. Catalyzes the conversion of glucosamine-6-phosphate to glucosamine-1-phosphate. The sequence is that of Phosphoglucosamine mutase from Rhodococcus jostii (strain RHA1).